Consider the following 351-residue polypeptide: MDYRSAGVDIELGRAFVKGIRERVEGSQAQSSGSSGTLGGIGGFAGLLELPAGYRAPVLVAGTDGVGTKLEIAQQWGQHRGVGIDLVAMCVNDVLTVGARPLFFLDYIATGKLEPEALWQVIDGILEGCQEAGCQLLGGETAEMPGFYPPGKYDLAGFCVGIVERADVLDSSRVQLGDRLWALPSSGLHSNGFSLVRRIVAERGWPWDHQPPGWDRPLAEVFLTPTRIYVQAVQRLQAAGIPLHGMAHITGGGIPENLPRCLAPEQAARLEPHSWPIPPEFLWLQEQGQVETLEMFNTFNLGVGYVLVIPPEAENRLRSLLPEAFPIGEVVPARPGESRVLGLEEWGSLVP.

It belongs to the AIR synthase family.

It is found in the cytoplasm. The catalysed reaction is 2-formamido-N(1)-(5-O-phospho-beta-D-ribosyl)acetamidine + ATP = 5-amino-1-(5-phospho-beta-D-ribosyl)imidazole + ADP + phosphate + H(+). It participates in purine metabolism; IMP biosynthesis via de novo pathway; 5-amino-1-(5-phospho-D-ribosyl)imidazole from N(2)-formyl-N(1)-(5-phospho-D-ribosyl)glycinamide: step 2/2. This is Phosphoribosylformylglycinamidine cyclo-ligase from Synechococcus sp. (strain JA-3-3Ab) (Cyanobacteria bacterium Yellowstone A-Prime).